The primary structure comprises 519 residues: Cytochrome P450 52-E3 (519 aa).

The helical transmembrane segment at 10-30 (VLGGISVSFLLAYQAIYFYFI) threads the bilayer. Cysteine 461 is a heme binding site.

Belongs to the cytochrome P450 family. It depends on heme as a cofactor.

It is found in the membrane. The enzyme catalyses an omega-methyl-long-chain fatty acid + reduced [NADPH--hemoprotein reductase] + O2 = an omega-hydroxy-long-chain fatty acid + oxidized [NADPH--hemoprotein reductase] + H2O + H(+). It carries out the reaction (9Z)-octadecenoate + reduced [NADPH--hemoprotein reductase] + O2 = 18-hydroxy-(9Z)-octadecenoate + oxidized [NADPH--hemoprotein reductase] + H2O + H(+). It catalyses the reaction hexadecanoate + reduced [NADPH--hemoprotein reductase] + O2 = 16-hydroxyhexadecanoate + oxidized [NADPH--hemoprotein reductase] + H2O + H(+). The catalysed reaction is (9Z)-hexadecenoate + reduced [NADPH--hemoprotein reductase] + O2 = (9Z)-16-hydroxyhexadec-9-enoate + oxidized [NADPH--hemoprotein reductase] + H2O + H(+). Its function is as follows. Catalyzes the terminal (at the omega-position) hydroxylation of a fatty acid. Probably involved in alkane metabolism. Has minor activity toward myristic acid, palmitic acid, palmitoleic acid and oleic acid. This chain is Cytochrome P450 52-E3, found in Starmerella bombicola (Yeast).